Reading from the N-terminus, the 126-residue chain is SGSCTVKTCWMRLPTFRTVGDFLKDRFDGASRVIYGNKGSNRASRVELHHLEPENPAHKPPSPHDLVYFEKSPNFCTYSGKTGTAGTAGRSCNSSSPALDGCELLCCGRGYRTRTQRVTERCNCTF.

Ser-1 carries the O-palmitoleoyl serine; by PORCN lipid modification. Cys-92 and Cys-107 form a disulfide bridge. 2 N-linked (GlcNAc...) asparagine glycosylation sites follow: Asn-93 and Asn-123.

The protein belongs to the Wnt family. In terms of processing, palmitoleoylation is required for efficient binding to frizzled receptors. Palmitoleoylation is necessary for proper trafficking to cell surface. Depalmitoleoylated by NOTUM, leading to inhibit Wnt signaling pathway.

Its subcellular location is the secreted. It localises to the extracellular space. It is found in the extracellular matrix. Functionally, ligand for members of the frizzled family of seven transmembrane receptors. Acts in the canonical Wnt signaling pathway by promoting beta-catenin-dependent transcriptional activation. Plays an essential role in the development of the embryonic brain and central nervous system (CNS). Has a role in osteoblast function, bone development and bone homeostasis. In Plestiodon skiltonianus (Western skink), this protein is Protein Wnt-1 (WNT-1).